Reading from the N-terminus, the 240-residue chain is UDP-2,3-diacylglucosamine hydrolase (240 aa).

Residues Asp-8, His-10, Asp-41, Asn-79, and His-114 each coordinate Mn(2+). Residue 79 to 80 (NR) participates in substrate binding. 5 residues coordinate substrate: Asp-122, Ser-160, Asn-164, Lys-167, and His-195. 2 residues coordinate Mn(2+): His-195 and His-197.

Belongs to the LpxH family. The cofactor is Mn(2+).

The protein localises to the cell inner membrane. The catalysed reaction is UDP-2-N,3-O-bis[(3R)-3-hydroxytetradecanoyl]-alpha-D-glucosamine + H2O = 2-N,3-O-bis[(3R)-3-hydroxytetradecanoyl]-alpha-D-glucosaminyl 1-phosphate + UMP + 2 H(+). Its pathway is glycolipid biosynthesis; lipid IV(A) biosynthesis; lipid IV(A) from (3R)-3-hydroxytetradecanoyl-[acyl-carrier-protein] and UDP-N-acetyl-alpha-D-glucosamine: step 4/6. Functionally, hydrolyzes the pyrophosphate bond of UDP-2,3-diacylglucosamine to yield 2,3-diacylglucosamine 1-phosphate (lipid X) and UMP by catalyzing the attack of water at the alpha-P atom. Involved in the biosynthesis of lipid A, a phosphorylated glycolipid that anchors the lipopolysaccharide to the outer membrane of the cell. The polypeptide is UDP-2,3-diacylglucosamine hydrolase (Salmonella newport (strain SL254)).